The sequence spans 293 residues: Acetyl-coenzyme A carboxylase carboxyl transferase subunit beta (293 aa).

A CoA carboxyltransferase N-terminal domain is found at 29 to 293 (LWVKCSECSQ…GVKELAEANI (265 aa)). Zn(2+) contacts are provided by Cys-33, Cys-36, Cys-52, and Cys-55. A C4-type zinc finger spans residues 33–55 (CSECSQVAYRKDLISNFNVCSNC).

Belongs to the AccD/PCCB family. As to quaternary structure, acetyl-CoA carboxylase is a heterohexamer composed of biotin carboxyl carrier protein (AccB), biotin carboxylase (AccC) and two subunits each of ACCase subunit alpha (AccA) and ACCase subunit beta (AccD). The cofactor is Zn(2+).

The protein resides in the cytoplasm. The enzyme catalyses N(6)-carboxybiotinyl-L-lysyl-[protein] + acetyl-CoA = N(6)-biotinyl-L-lysyl-[protein] + malonyl-CoA. It participates in lipid metabolism; malonyl-CoA biosynthesis; malonyl-CoA from acetyl-CoA: step 1/1. Functionally, component of the acetyl coenzyme A carboxylase (ACC) complex. Biotin carboxylase (BC) catalyzes the carboxylation of biotin on its carrier protein (BCCP) and then the CO(2) group is transferred by the transcarboxylase to acetyl-CoA to form malonyl-CoA. This is Acetyl-coenzyme A carboxylase carboxyl transferase subunit beta from Prochlorococcus marinus (strain MIT 9312).